A 1674-amino-acid chain; its full sequence is MLGAPDESSVRVAVRIRPQLAKEKIEGCHICTSVTPGEPQVFLGKDKAFTFDYVFDIDSQQEQIYIQCIEKLIEGCFEGYNATVFAYGQTGAGKTYTMGTGFDVNIVEEELGIISRAVKHLFKSIEEKKHIAIKNGLPAPDFKVNAQFLELYNEEVLDLFDTTRDIDAKSKKSNIRIHEDSTGGIYTVGVTTRTVNTESEMMQCLKLGALSRTTASTQMNVQSSRSHAIFTIHVCQTRVCPQIDADNATDNKIISESAQMNEFETLTAKFHFVDLAGSERLKRTGATGERAKEGISINCGLLALGNVISALGDKSKRATHVPYRDSKLTRLLQDSLGGNSQTIMIACVSPSDRDFMETLNTLKYANRARNIKNKVMVNQDRASQQINALRSEITRLQMELMEYKTGKRIIDEEGVESINDMFHENAMLQTENNNLRVRIKAMQETVDALRSRITQLVSDQANHVLARAGEGNEEISNMIHSYIKEIEDLRAKLLESEAVNENLRKNLTRATARAPYFSGSSTFSPTILSSDKETIEIIDLAKKDLEKLKRKEKRKKKRLQKLEESNREERSVAGKEDNTDTDQEKKEEKGVSERENNELEVEESQEVSDHEDEEEEEEEEEDDIDGGESSDESDSESDEKANYQADLANITCEIAIKQKLIDELENSQKRLQTLKKQYEEKLMMLQHKIRDTQLERDQVLQNLGSVESYSEEKAKKVRSEYEKKLQAMNKELQRLQAAQKEHARLLKNQSQYEKQLKKLQQDVMEMKKTKVRLMKQMKEEQEKARLTESRRNREIAQLKKDQRKRDHQLRLLEAQKRNQEVVLRRKTEEVTALRRQVRPMSDKVAGKVTRKLSSSDAPAQDTGSSAAAVETDASRTGAQQKMRIPVARVQALPTPATNGNRKKYQRKGLTGRVFISKTARMKWQLLERRVTDIIMQKMTISNMEADMNRLLKQREELTKRREKLSKRREKIVKENGEGDKNVANINEEMESLTANIDYINDSISDCQANIMQMEEAKEEGETLDVTAVINACTLTEARYLLDHFLSMGINKGLQAAQKEAQIKVLEGRLKQTEITSATQNQLLFHMLKEKAELNPELDALLGHALQDLDSVPLENVEDSTDEDAPLNSPGSEGSTLSSDLMKLCGEVKPKNKARRRTTTQMELLYADSSELASDTSTGDASLPGPLTPVAEGQEIGMNTETSGTSAREKELSPPPGLPSKIGSISRQSSLSEKKIPEPSPVTRRKAYEKAEKSKAKEQKHSDSGTSEASLSPPSSPPSRPRNELNVFNRLTVSQGNTSVQQDKSDESDSSLSEVHRSSRRGIINPFPASKGIRAFPLQCIHIAEGHTKAVLCVDSTDDLLFTGSKDRTCKVWNLVTGQEIMSLGGHPNNVVSVKYCNYTSLVFTVSTSYIKVWDIRDSAKCIRTLTSSGQVTLGDACSASTSRTVAIPSGENQINQIALNPTGTFLYAASGNAVRMWDLKRFQSTGKLTGHLGPVMCLTVDQISSGQDLIITGSKDHYIKMFDVTEGALGTVSPTHNFEPPHYDGIEALTIQGDNLFSGSRDNGIKKWDLTQKDLLQQVPNAHKDWVCALGVVPDHPVLLSGCRGGILKVWNMDTFMPVGEMKGHDSPINAICVNSTHIFTAADDRTVRIWKARNLQDGQISDTGDLGEDIASN.

Met1 bears the N-acetylmethionine mark. The Kinesin motor domain occupies 9-371 (SVRVAVRIRP…LKYANRARNI (363 aa)). 88 to 95 (GQTGAGKT) lines the ATP pocket. Residues 365–575 (ANRARNIKNK…NREERSVAGK (211 aa)) adopt a coiled-coil conformation. A Phosphoserine modification is found at Ser524. Disordered regions lie at residues 556–641 (KKRL…DEKA), 779–804 (EEQE…DQRK), and 841–881 (SDKV…AQQK). Basic and acidic residues predominate over residues 560–597 (QKLEESNREERSVAGKEDNTDTDQEKKEEKGVSERENN). Positions 598–637 (ELEVEESQEVSDHEDEEEEEEEEEDDIDGGESSDESDSES) are enriched in acidic residues. Polar residues predominate over residues 851-865 (KLSSSDAPAQDTGSS). Coiled coils occupy residues 931 to 1019 (TDII…AKEE) and 1053 to 1083 (LQAA…NQLL). Positions 1116–1138 (VEDSTDEDAPLNSPGSEGSTLSS) are disordered. A compositionally biased stretch (polar residues) spans 1128-1138 (SPGSEGSTLSS). An interaction with KANK1 and KANK2 region spans residues 1146–1167 (EVKPKNKARRRTTTQMELLYAD). Composition is skewed to polar residues over residues 1170-1179 (ELASDTSTGD) and 1196-1205 (GMNTETSGTS). A disordered region spans residues 1170-1318 (ELASDTSTGD…SSLSEVHRSS (149 aa)). Phosphoserine is present on residues Ser1212, Ser1225, Ser1229, and Ser1239. Over residues 1245-1262 (KAYEKAEKSKAKEQKHSD) the composition is skewed to basic and acidic residues. Positions 1288–1297 (NRLTVSQGNT) are enriched in polar residues. 7 WD repeats span residues 1345–1382 (GHTK…EIMS), 1385–1423 (GHPN…KCIR), 1449–1487 (SGEN…STGK), 1490–1532 (GHLG…LGTV), 1541–1578 (PHYD…LLQQ), 1582–1621 (AHKD…PVGE), and 1624–1661 (GHDS…DGQI). Ser1662 is modified (phosphoserine). Thr1664 is modified (phosphothreonine). The residue at position 1673 (Ser1673) is a Phosphoserine.

The protein belongs to the TRAFAC class myosin-kinesin ATPase superfamily. Kinesin family. Part of a cortical microtubule stabilization complex (CMSC) composed of KANK1, PPFIA1, PPFIBP1, ERC1/ELKS, PHLDB2/LL5beta, CLASPs, KIF21A and possibly additional interactors; within CMSCs KANK1 and PHLDB2/LL5beta seem to be the core components for recruiting microtubule-binding proteins KIF21A and CLASPs, whereas PPFIA1, PPFIBP1 and ERC1/ELKS serve as scaffolds for protein clustering. Interacts (via residues 1146-1167) with KANK1 (via ankyrin repeats 1-5) and KANK2 (via ankyrin repeats 1-5).

The protein localises to the cytoplasm. It is found in the cytoskeleton. It localises to the cell cortex. Its subcellular location is the cell projection. The protein resides in the axon. The protein localises to the dendrite. It is found in the growth cone. Its function is as follows. Processive microtubule plus-end directed motor protein involved in neuronal axon guidance. Is recruited by KANK1 to cortical microtubule stabilizing complexes (CMSCs) at focal adhesions (FAs) rims where it promotes microtubule capture and stability. Controls microtubule polymerization rate at axonal growth cones and suppresses microtubule growth without inducing microtubule disassembly once it reaches the cell cortex. The protein is Kinesin-like protein KIF21A (KIF21A) of Homo sapiens (Human).